We begin with the raw amino-acid sequence, 130 residues long: Small ribosomal subunit protein uS9 (130 aa).

The protein belongs to the universal ribosomal protein uS9 family.

The sequence is that of Small ribosomal subunit protein uS9 from Marinobacter nauticus (strain ATCC 700491 / DSM 11845 / VT8) (Marinobacter aquaeolei).